The sequence spans 723 residues: Catalase-peroxidase (723 aa).

A cross-link (tryptophyl-tyrosyl-methioninium (Trp-Tyr) (with M-252)) is located at residues 98-226 (WHSAGSYRVG…LAAVMMGLIY (129 aa)). Residue H99 is the Proton acceptor of the active site. The tryptophyl-tyrosyl-methioninium (Tyr-Met) (with W-98) cross-link spans 226 to 252 (YVNPEGVDGNPDPLKTAKDMRVTFARM). H267 contacts heme b.

The protein belongs to the peroxidase family. Peroxidase/catalase subfamily. In terms of assembly, homodimer or homotetramer. Requires heme b as cofactor. Formation of the three residue Trp-Tyr-Met cross-link is important for the catalase, but not the peroxidase activity of the enzyme.

The enzyme catalyses H2O2 + AH2 = A + 2 H2O. It carries out the reaction 2 H2O2 = O2 + 2 H2O. Functionally, bifunctional enzyme with both catalase and broad-spectrum peroxidase activity. The polypeptide is Catalase-peroxidase (Vibrio vulnificus (strain CMCP6)).